The chain runs to 549 residues: Undecaprenyl phosphate-alpha-4-amino-4-deoxy-L-arabinose arabinosyl transferase (549 aa).

12 consecutive transmembrane segments (helical) span residues 9–29, 80–100, 112–132, 136–156, 176–196, 204–224, 256–276, 288–308, 312–332, 346–366, 376–396, and 402–422; these read LLLI…GLWI, LFGV…LAYL, SLAC…SGYA, PQFT…LDAG, FLTK…PYML, LLGY…PWAL, PWWF…GLLP, QAPV…FSLS, LPTY…HALV, NGLL…YLQL, FELF…LAQW, and AWAA…AAMP.

The protein belongs to the glycosyltransferase 83 family.

The protein resides in the cell inner membrane. It carries out the reaction 4-amino-4-deoxy-alpha-L-arabinopyranosyl di-trans,octa-cis-undecaprenyl phosphate + lipid IVA = lipid IIA + di-trans,octa-cis-undecaprenyl phosphate.. It participates in lipopolysaccharide metabolism; 4-amino-4-deoxy-beta-L-arabinose-lipid A biosynthesis. Its function is as follows. Catalyzes the transfer of the L-Ara4N moiety of the glycolipid undecaprenyl phosphate-alpha-L-Ara4N to lipid A. The modified arabinose is attached to lipid A and is required for resistance to polymyxin and cationic antimicrobial peptides. The sequence is that of Undecaprenyl phosphate-alpha-4-amino-4-deoxy-L-arabinose arabinosyl transferase from Pseudomonas aeruginosa (strain ATCC 15692 / DSM 22644 / CIP 104116 / JCM 14847 / LMG 12228 / 1C / PRS 101 / PAO1).